Reading from the N-terminus, the 777-residue chain is Polyribonucleotide nucleotidyltransferase (777 aa).

Mg(2+)-binding residues include Asp494 and Asp500. Positions 561 to 620 (PRIITLQIDPSKIGALIGPGGKTIRSIIEQTGAQIDVEDDGRVFVTTPDADGARMAQSLI) constitute a KH domain. One can recognise an S1 motif domain in the interval 630-699 (GEIFTGKVVR…GTGKLSLSRR (70 aa)). A disordered region spans residues 703–777 (TGETAEQRKS…NDRRGGGFRG (75 aa)). Residues 718–727 (GPRGGGGGGD) are compositionally biased toward gly residues. Composition is skewed to basic and acidic residues over residues 728–761 (RGPR…DRGP) and 768–777 (NDRRGGGFRG).

Belongs to the polyribonucleotide nucleotidyltransferase family. The cofactor is Mg(2+).

The protein resides in the cytoplasm. It catalyses the reaction RNA(n+1) + phosphate = RNA(n) + a ribonucleoside 5'-diphosphate. In terms of biological role, involved in mRNA degradation. Catalyzes the phosphorolysis of single-stranded polyribonucleotides processively in the 3'- to 5'-direction. In Herpetosiphon aurantiacus (strain ATCC 23779 / DSM 785 / 114-95), this protein is Polyribonucleotide nucleotidyltransferase.